A 463-amino-acid polypeptide reads, in one-letter code: Chaperone SurA (463 aa).

The first 25 residues, 1-25 (MTKPFSVLLASLLVITSTVSPLASA), serve as a signal peptide directing secretion. PpiC domains are found at residues 174–276 (GSQY…KLVE) and 289–388 (LTEY…QRVG). 2 disordered regions span residues 329–348 (ATAK…GDLG) and 434–463 (GDRA…QPTR). Positions 440–452 (DATAAPEPAAAPA) are enriched in low complexity. Residues 453 to 463 (APTPPPAQPTR) show a composition bias toward pro residues.

The protein resides in the periplasm. The catalysed reaction is [protein]-peptidylproline (omega=180) = [protein]-peptidylproline (omega=0). In terms of biological role, chaperone involved in the correct folding and assembly of outer membrane proteins. Recognizes specific patterns of aromatic residues and the orientation of their side chains, which are found more frequently in integral outer membrane proteins. May act in both early periplasmic and late outer membrane-associated steps of protein maturation. The polypeptide is Chaperone SurA (Xanthomonas campestris pv. campestris (strain 8004)).